The following is a 242-amino-acid chain: Large ribosomal subunit protein uL1 (242 aa).

It belongs to the universal ribosomal protein uL1 family. Part of the 50S ribosomal subunit.

Binds directly to 23S rRNA. The L1 stalk is quite mobile in the ribosome, and is involved in E site tRNA release. Functionally, protein L1 is also a translational repressor protein, it controls the translation of the L11 operon by binding to its mRNA. This chain is Large ribosomal subunit protein uL1, found in Dictyoglomus thermophilum (strain ATCC 35947 / DSM 3960 / H-6-12).